The chain runs to 34 residues: uncharacterized protein (34 aa).

The interval 1-34 (MRLRRLFKQPSTRVLGVTNCPRQQGHQKRREQPD) is disordered. A compositionally biased stretch (basic residues) spans 25–34 (GHQKRREQPD).

This is an uncharacterized protein from Schizosaccharomyces pombe (strain 972 / ATCC 24843) (Fission yeast).